A 244-amino-acid chain; its full sequence is ATP synthase subunit b 2 (244 aa).

The helical transmembrane segment at 2-22 (TVDWWTIGLQVINVSVLIWLL) threads the bilayer.

This sequence belongs to the ATPase B chain family. F-type ATPases have 2 components, F(1) - the catalytic core - and F(0) - the membrane proton channel. F(1) has five subunits: alpha(3), beta(3), gamma(1), delta(1), epsilon(1). F(0) has three main subunits: a(1), b(2) and c(10-14). The alpha and beta chains form an alternating ring which encloses part of the gamma chain. F(1) is attached to F(0) by a central stalk formed by the gamma and epsilon chains, while a peripheral stalk is formed by the delta and b chains.

Its subcellular location is the cell inner membrane. Its function is as follows. F(1)F(0) ATP synthase produces ATP from ADP in the presence of a proton or sodium gradient. F-type ATPases consist of two structural domains, F(1) containing the extramembraneous catalytic core and F(0) containing the membrane proton channel, linked together by a central stalk and a peripheral stalk. During catalysis, ATP synthesis in the catalytic domain of F(1) is coupled via a rotary mechanism of the central stalk subunits to proton translocation. Component of the F(0) channel, it forms part of the peripheral stalk, linking F(1) to F(0). This chain is ATP synthase subunit b 2, found in Gluconobacter oxydans (strain 621H) (Gluconobacter suboxydans).